We begin with the raw amino-acid sequence, 460 residues long: Telomere-binding protein homolog (460 aa).

It belongs to the telombin family.

It is found in the nucleus. It localises to the chromosome. The protein resides in the telomere. Functionally, may bind telomeric T4G4 sequences. This is Telomere-binding protein homolog from Euplotes crassus.